A 655-amino-acid chain; its full sequence is p-hydroxybenzoic acid efflux pump subunit AaeB (655 aa).

Helical transmembrane passes span 13–33 (FAVK…HFQL), 38–58 (WAVL…GGEP), 67–89 (GFLR…IAMI), 93–112 (LLMI…ISSL), 121–141 (WGLA…EPLL), 152–172 (EIVI…PRSI), 370–390 (LFWL…IAVV), 407–427 (FIYG…VIIP), 431–451 (QSML…GIEV), 459–479 (MGAL…TFHF), and 482–502 (FLDS…VILL).

This sequence belongs to the aromatic acid exporter ArAE (TC 2.A.85) family.

It is found in the cell inner membrane. Its function is as follows. Forms an efflux pump with AaeA. Could function as a metabolic relief valve, allowing to eliminate certain compounds when they accumulate to high levels in the cell. In Escherichia coli O9:H4 (strain HS), this protein is p-hydroxybenzoic acid efflux pump subunit AaeB.